A 266-amino-acid polypeptide reads, in one-letter code: Luciferase (266 aa).

The helical transmembrane segment at 22-41 threads the bilayer; that stretch reads GLAAACCALAVASTIAFPYI.

The protein belongs to the fungal luciferase family.

The protein resides in the membrane. The catalysed reaction is 3-hydroxyhispidin + O2 = (E)-caffeoylpyruvate + hnu + CO2. It catalyses the reaction 3-hydroxyhispidin + O2 = 4-[(E)-2-(3,4-dihydroxyphenyl)ethenyl]-1,7-dihydroxy-2,3,5-trioxabicyclo[2.2.2]oct-7-en-6-one. Its function is as follows. Luciferase; part of the gene cluster that mediates the fungal bioluminescence cycle. Uses the fungal luciferin 3-hydroxyhispidin as a substrate to produce an endoperoxide as a high-energy intermediate with decomposition that yields oxyluciferin (also known as caffeoylpyruvate) and light emission. The fungal bioluminescence cycle begins with the hispidin synthetase that catalyzes the formation of hispidin which is further hydroxylated by the hispidin-3-hydroxylase, yielding the fungal luciferin 3-hydroxyhispidin. The luciferase then produces an endoperoxide as a high-energy intermediate with decomposition that yields oxyluciferin and light emission. Oxyluciferin can be recycled to caffeic acid by caffeoylpyruvate hydrolase. The chain is Luciferase from Armillaria gallica (Bulbous honey fungus).